A 76-amino-acid polypeptide reads, in one-letter code: Putative snRNP Sm-like protein (76 aa).

The Sm domain occupies 4–76 (RPLDVIHKSL…VLALSPVELE (73 aa)).

The protein belongs to the snRNP Sm proteins family.

The polypeptide is Putative snRNP Sm-like protein (Thermococcus kodakarensis (strain ATCC BAA-918 / JCM 12380 / KOD1) (Pyrococcus kodakaraensis (strain KOD1))).